Here is a 726-residue protein sequence, read N- to C-terminus: Methionine--tRNA ligase (726 aa).

The 'HIGH' region motif lies at 12–22 (PYVNNIPHLGN). Residues Cys-143, Cys-146, Cys-155, and Cys-158 each contribute to the Zn(2+) site. The 'KMSKS' region signature appears at 330-334 (KFSKS). Lys-333 contacts ATP. Positions 562–667 (FSEQICLKTV…DNPIPGERVI (106 aa)) constitute a tRNA-binding domain.

It belongs to the class-I aminoacyl-tRNA synthetase family. MetG type 1 subfamily. As to quaternary structure, homodimer. The cofactor is Zn(2+).

The protein localises to the cytoplasm. The catalysed reaction is tRNA(Met) + L-methionine + ATP = L-methionyl-tRNA(Met) + AMP + diphosphate. Its function is as follows. Is required not only for elongation of protein synthesis but also for the initiation of all mRNA translation through initiator tRNA(fMet) aminoacylation. The polypeptide is Methionine--tRNA ligase (Borrelia recurrentis (strain A1)).